A 325-amino-acid polypeptide reads, in one-letter code: E3 ubiquitin-protein ligase SIAH2 (325 aa).

The span at 1 to 15 (MSRPSSTGPSANKPC) shows a compositional bias: polar residues. Residues 1-43 (MSRPSSTGPSANKPCSKQPPPPQTPHAPSPAAPPAAATISAAG) are disordered. The residue at position 6 (Ser6) is a Phosphoserine. A Phosphoserine; by DYRK2 modification is found at Ser16. The span at 17–33 (KQPPPPQTPHAPSPAAP) shows a compositional bias: pro residues. Thr24 bears the Phosphothreonine; by MAPK14 mark. Ser29 is subject to Phosphoserine; by DYRK2 and MAPK14. Residues 34–43 (PAAATISAAG) show a composition bias toward low complexity. Ser69 is subject to Phosphoserine; by DYRK2. The RING-type zinc finger occupies 81-116 (CPVCFDYVLPPILQCQAGHLVCNQCRQKLSCCPTCR). The residue at position 120 (Thr120) is a Phosphothreonine; by DYRK2. Positions 131 to 323 (VASAVLFPCK…LGINVTISTC (193 aa)) are SBD. The SIAH-type zinc finger occupies 134–194 (AVLFPCKYAT…VMSHLMHAHK (61 aa)). The Zn(2+) site is built by Cys139, Cys146, His158, Cys162, Cys169, Cys176, His188, and His193.

It belongs to the SINA (Seven in absentia) family. In terms of assembly, homodimer. Interacts with VAV1, without mediating its ubiquitin-mediated degradation. Probable component of some large E3 complex possibly composed of UBE2D1, SIAH2, CACYBP/SIP, SKP1, APC and TBL1X. Interacts with UBE2I. Interacts with UBE2E2. Interacts with PEG10, which may inhibit its activity. Interacts with PEG3 and EGLN2. Interacts with DYRK2. Interacts with SNCAIP. Interacts with NR1D1 and NR1D2. Interacts with DCC. Interacts with AXIN1. Phosphorylated at Thr-24 and Ser-29 by MAPK14, which mediates the degradation by the proteasome of EGLN3. Phosphorylated at Ser-29 by DYRK2; this increases the ubiquitin ligase activity and promotes degradation of EGLN3. Detected in brain (at protein level).

It is found in the cytoplasm. It localises to the nucleus. It catalyses the reaction S-ubiquitinyl-[E2 ubiquitin-conjugating enzyme]-L-cysteine + [acceptor protein]-L-lysine = [E2 ubiquitin-conjugating enzyme]-L-cysteine + N(6)-ubiquitinyl-[acceptor protein]-L-lysine.. The protein operates within protein modification; protein ubiquitination. In terms of biological role, E3 ubiquitin-protein ligase that mediates ubiquitination and subsequent proteasomal degradation of target proteins. E3 ubiquitin ligases accept ubiquitin from an E2 ubiquitin-conjugating enzyme in the form of a thioester and then directly transfers the ubiquitin to targeted substrates. Mediates E3 ubiquitin ligase activity either through direct binding to substrates or by functioning as the essential RING domain subunit of larger E3 complexes. Mediates ubiquitination and proteasomal degradation of DYRK2 in response to hypoxia. Promotes monoubiquitination of SNCA. Triggers the ubiquitin-mediated degradation of many substrates, including proteins involved in transcription regulation (GPS2, POU2AF1, PML, NCOR1), a cell surface receptor (DCC), an antiapoptotic protein (BAG1), and a protein involved in synaptic vesicle function in neurons (SYP). It is thereby involved in apoptosis, tumor suppression, cell cycle, transcription and signaling processes. Has some overlapping function with SIAH1. Triggers the ubiquitin-mediated degradation of TRAF2, whereas SIAH1 does not. Regulates cellular clock function via ubiquitination of circadian transcriptional repressors NR1D1 and NR1D2 leading to their proteasomal degradation. Plays an important role in mediating the rhythmic degradation/clearance of NR1D1 and NR1D2 contributing to their circadian profile of protein abundance. Mediates ubiquitination and degradation of EGLN2 and EGLN3 in response to the unfolded protein response (UPR), leading to their degradation and subsequent stabilization of ATF4. Also part of the Wnt signaling pathway in which it mediates the Wnt-induced ubiquitin-mediated proteasomal degradation of AXIN1. The chain is E3 ubiquitin-protein ligase SIAH2 (Siah2) from Rattus norvegicus (Rat).